The following is a 116-amino-acid chain: Ribonuclease P protein component (116 aa).

This sequence belongs to the RnpA family. In terms of assembly, consists of a catalytic RNA component (M1 or rnpB) and a protein subunit.

It catalyses the reaction Endonucleolytic cleavage of RNA, removing 5'-extranucleotides from tRNA precursor.. In terms of biological role, RNaseP catalyzes the removal of the 5'-leader sequence from pre-tRNA to produce the mature 5'-terminus. It can also cleave other RNA substrates such as 4.5S RNA. The protein component plays an auxiliary but essential role in vivo by binding to the 5'-leader sequence and broadening the substrate specificity of the ribozyme. This chain is Ribonuclease P protein component, found in Caldanaerobacter subterraneus subsp. tengcongensis (strain DSM 15242 / JCM 11007 / NBRC 100824 / MB4) (Thermoanaerobacter tengcongensis).